The sequence spans 793 residues: Endonuclease MutS2 (793 aa).

An ATP-binding site is contributed by 335-342; that stretch reads GPNTGGKT. Residues 718–793 form the Smr domain; that stretch reads IDVRGYNLEE…ESGVTIVELR (76 aa).

Belongs to the DNA mismatch repair MutS family. MutS2 subfamily. As to quaternary structure, homodimer. Binds to stalled ribosomes, contacting rRNA.

Functionally, endonuclease that is involved in the suppression of homologous recombination and thus may have a key role in the control of bacterial genetic diversity. Acts as a ribosome collision sensor, splitting the ribosome into its 2 subunits. Detects stalled/collided 70S ribosomes which it binds and splits by an ATP-hydrolysis driven conformational change. Acts upstream of the ribosome quality control system (RQC), a ribosome-associated complex that mediates the extraction of incompletely synthesized nascent chains from stalled ribosomes and their subsequent degradation. Probably generates substrates for RQC. In Acetivibrio thermocellus (strain ATCC 27405 / DSM 1237 / JCM 9322 / NBRC 103400 / NCIMB 10682 / NRRL B-4536 / VPI 7372) (Clostridium thermocellum), this protein is Endonuclease MutS2.